The chain runs to 240 residues: Aspartate/glutamate leucyltransferase (240 aa).

This sequence belongs to the R-transferase family. Bpt subfamily.

It localises to the cytoplasm. It carries out the reaction N-terminal L-glutamyl-[protein] + L-leucyl-tRNA(Leu) = N-terminal L-leucyl-L-glutamyl-[protein] + tRNA(Leu) + H(+). The catalysed reaction is N-terminal L-aspartyl-[protein] + L-leucyl-tRNA(Leu) = N-terminal L-leucyl-L-aspartyl-[protein] + tRNA(Leu) + H(+). Its function is as follows. Functions in the N-end rule pathway of protein degradation where it conjugates Leu from its aminoacyl-tRNA to the N-termini of proteins containing an N-terminal aspartate or glutamate. The sequence is that of Aspartate/glutamate leucyltransferase from Gluconobacter oxydans (strain 621H) (Gluconobacter suboxydans).